The sequence spans 289 residues: Serine/threonine-protein phosphatase Pgam5, mitochondrial (289 aa).

Residues 7-23 (FACGTGAGLAAYYLQRL) traverse the membrane as a helical segment.

Belongs to the phosphoglycerate mutase family. BPG-dependent PGAM subfamily. In terms of assembly, interacts with Pk92B/ASK1.

Its subcellular location is the mitochondrion outer membrane. It catalyses the reaction O-phospho-L-seryl-[protein] + H2O = L-seryl-[protein] + phosphate. The enzyme catalyses O-phospho-L-threonyl-[protein] + H2O = L-threonyl-[protein] + phosphate. In terms of biological role, displays phosphatase activity for serine/threonine residues, and dephosphorylates and activates Pk92B kinase. Has apparently no phosphoglycerate mutase activity. This is Serine/threonine-protein phosphatase Pgam5, mitochondrial from Drosophila sechellia (Fruit fly).